A 93-amino-acid polypeptide reads, in one-letter code: MFKVNEYFDGTVKSIAFDMTAGPATIGVMAAGEYEFGTSQLEIMHVVAGALTVKLPGSDEWQEYASGSQFTVPANSKFQLKVAQDTAYLCEYR.

The protein belongs to the nucleoside phosphorylase PpnP family.

It carries out the reaction a purine D-ribonucleoside + phosphate = a purine nucleobase + alpha-D-ribose 1-phosphate. It catalyses the reaction adenosine + phosphate = alpha-D-ribose 1-phosphate + adenine. The catalysed reaction is cytidine + phosphate = cytosine + alpha-D-ribose 1-phosphate. The enzyme catalyses guanosine + phosphate = alpha-D-ribose 1-phosphate + guanine. It carries out the reaction inosine + phosphate = alpha-D-ribose 1-phosphate + hypoxanthine. It catalyses the reaction thymidine + phosphate = 2-deoxy-alpha-D-ribose 1-phosphate + thymine. The catalysed reaction is uridine + phosphate = alpha-D-ribose 1-phosphate + uracil. The enzyme catalyses xanthosine + phosphate = alpha-D-ribose 1-phosphate + xanthine. In terms of biological role, catalyzes the phosphorolysis of diverse nucleosides, yielding D-ribose 1-phosphate and the respective free bases. Can use uridine, adenosine, guanosine, cytidine, thymidine, inosine and xanthosine as substrates. Also catalyzes the reverse reactions. The sequence is that of Pyrimidine/purine nucleoside phosphorylase from Pseudomonas aeruginosa (strain LESB58).